A 181-amino-acid polypeptide reads, in one-letter code: Adenine phosphoribosyltransferase 2 (181 aa).

At S2 the chain carries N-acetylserine.

This sequence belongs to the purine/pyrimidine phosphoribosyltransferase family.

Its subcellular location is the cytoplasm. The catalysed reaction is AMP + diphosphate = 5-phospho-alpha-D-ribose 1-diphosphate + adenine. It functions in the pathway purine metabolism; AMP biosynthesis via salvage pathway; AMP from adenine: step 1/1. In terms of biological role, catalyzes a salvage reaction resulting in the formation of AMP, that is energically less costly than de novo synthesis. May lack catalytic activity. The protein is Adenine phosphoribosyltransferase 2 (APT2) of Saccharomyces cerevisiae (strain ATCC 204508 / S288c) (Baker's yeast).